Here is a 129-residue protein sequence, read N- to C-terminus: MKRGGIVNAQLAGALARLGHTDTLVVCDAGLPIPHGPEVVDLAFRLGIPGFGPVLEGILEELVVEEAVAAREVEGANPDCHALLASRLPELKLVPHWELKLRAADARLVVRTGEATPYSNVILRCGVPF.

His-20 acts as the Proton donor in catalysis. Substrate is bound by residues Asp-28, His-96, and 118-120 (YSN).

Belongs to the RbsD / FucU family. RbsD subfamily. In terms of assembly, homodecamer.

It localises to the cytoplasm. It catalyses the reaction beta-D-ribopyranose = beta-D-ribofuranose. Its pathway is carbohydrate metabolism; D-ribose degradation; D-ribose 5-phosphate from beta-D-ribopyranose: step 1/2. Its function is as follows. Catalyzes the interconversion of beta-pyran and beta-furan forms of D-ribose. This chain is D-ribose pyranase 1, found in Rubrobacter xylanophilus (strain DSM 9941 / JCM 11954 / NBRC 16129 / PRD-1).